We begin with the raw amino-acid sequence, 79 residues long: Small ribosomal subunit protein bS18 (79 aa).

Belongs to the bacterial ribosomal protein bS18 family. Part of the 30S ribosomal subunit. Forms a tight heterodimer with protein bS6.

Its function is as follows. Binds as a heterodimer with protein bS6 to the central domain of the 16S rRNA, where it helps stabilize the platform of the 30S subunit. This is Small ribosomal subunit protein bS18 from Streptococcus pneumoniae serotype 19F (strain G54).